The chain runs to 243 residues: ATP synthase subunit b, mitochondrial (243 aa).

It belongs to the eukaryotic ATPase B chain family. F-type ATPases have 2 components, CF(1) - the catalytic core - and CF(0) - the membrane proton channel. CF(1) has five subunits: alpha(3), beta(3), gamma(1), delta(1), epsilon(1). CF(0) has three main subunits: a, b and c.

It localises to the mitochondrion. Its subcellular location is the mitochondrion inner membrane. Functionally, mitochondrial membrane ATP synthase (F(1)F(0) ATP synthase or Complex V) produces ATP from ADP in the presence of a proton gradient across the membrane which is generated by electron transport complexes of the respiratory chain. F-type ATPases consist of two structural domains, F(1) - containing the extramembraneous catalytic core, and F(0) - containing the membrane proton channel, linked together by a central stalk and a peripheral stalk. During catalysis, ATP synthesis in the catalytic domain of F(1) is coupled via a rotary mechanism of the central stalk subunits to proton translocation. Part of the complex F(0) domain and the peripheric stalk, which acts as a stator to hold the catalytic alpha(3)beta(3) subcomplex and subunit a/ATP6 static relative to the rotary elements. The polypeptide is ATP synthase subunit b, mitochondrial (Drosophila melanogaster (Fruit fly)).